The sequence spans 227 residues: Cell wall mannoprotein CIS3 (227 aa).

The N-terminal stretch at 1–21 (MQFKNVALAASVAALSATASA) is a signal peptide. Residues 22-64 (EGYTPGEPWSTLTPTGSISCGAAEYTTTFGIAVQAITSSKAKR) constitute a propeptide that is removed on maturation. A PIR1/2/3 repeat occupies 65 to 78 (DVISQIGDGQVQAT). O-linked (Man) serine glycosylation is present at serine 68. An O-linked (Man) threonine glycan is attached at threonine 78. Positions 83–124 (AQATDSQAQATTTATPTSSEKISSSASKTSTNATSSSCATPS) are enriched in low complexity. Residues 83–127 (AQATDSQAQATTTATPTSSEKISSSASKTSTNATSSSCATPSLKD) form a disordered region. O-linked (Man) serine glycosylation is found at serine 105, serine 106, serine 107, and serine 109. Threonine 111 carries an O-linked (Man) threonine glycan. Residue serine 112 is glycosylated (O-linked (Man) serine). Threonine 113 carries O-linked (Man) threonine glycosylation. N-linked (GlcNAc...) asparagine glycosylation occurs at asparagine 114. The O-linked (Man) threonine glycan is linked to threonine 116. Serine 117 and serine 118 each carry an O-linked (Man) serine glycan.

Belongs to the PIR protein family. Covalently linked to beta-1,3-glucan of the inner cell wall layer via an alkali-sensitive ester linkage between the gamma-carboxyl group of glutamic acid, arising from Gln-74 within the PIR1/2/3 repeat, and hydroxyl groups of glucoses of beta-1,3-glucan chains. In terms of processing, extensively O-mannosylated. Also N-glycosylated.

It localises to the secreted. It is found in the cell wall. Its function is as follows. Component of the outer cell wall layer. Required for stability of the cell wall and for optimal growth. Required for resistance against several antifungal and cell wall-perturbing agents. The polypeptide is Cell wall mannoprotein CIS3 (CIS3) (Saccharomyces cerevisiae (strain ATCC 204508 / S288c) (Baker's yeast)).